Reading from the N-terminus, the 291-residue chain is Phosphatidylglycerol--prolipoprotein diacylglyceryl transferase (291 aa).

The next 4 membrane-spanning stretches (helical) occupy residues W24 to L44, F64 to Y84, I99 to L119, and G125 to L145. R147 lines the a 1,2-diacyl-sn-glycero-3-phospho-(1'-sn-glycerol) pocket. The next 3 membrane-spanning stretches (helical) occupy residues A187–L207, G211–F231, and M247–W267.

The protein belongs to the Lgt family.

It localises to the cell inner membrane. The enzyme catalyses L-cysteinyl-[prolipoprotein] + a 1,2-diacyl-sn-glycero-3-phospho-(1'-sn-glycerol) = an S-1,2-diacyl-sn-glyceryl-L-cysteinyl-[prolipoprotein] + sn-glycerol 1-phosphate + H(+). It participates in protein modification; lipoprotein biosynthesis (diacylglyceryl transfer). Catalyzes the transfer of the diacylglyceryl group from phosphatidylglycerol to the sulfhydryl group of the N-terminal cysteine of a prolipoprotein, the first step in the formation of mature lipoproteins. This is Phosphatidylglycerol--prolipoprotein diacylglyceryl transferase from Nitrobacter hamburgensis (strain DSM 10229 / NCIMB 13809 / X14).